The sequence spans 328 residues: Peroxidase 63 (328 aa).

Positions 1-27 (MAEQSQLKNLTIILLLLCLSFQSLSFA) are cleaved as a signal peptide. Disulfide bonds link Cys-41/Cys-122, Cys-74/Cys-79, Cys-128/Cys-324, and Cys-207/Cys-234. His-72 serves as the catalytic Proton acceptor. Residues Asp-73, Gly-78, Asp-80, and Ser-82 each coordinate Ca(2+). Substrate is bound at residue Pro-170. His-200 lines the heme b pocket. Position 201 (Thr-201) interacts with Ca(2+). Residues Asn-217 and Asn-218 are each glycosylated (N-linked (GlcNAc...) asparagine). Ca(2+) contacts are provided by Asp-248, Thr-251, and Asp-256.

It belongs to the peroxidase family. Classical plant (class III) peroxidase subfamily. Heme b is required as a cofactor. The cofactor is Ca(2+).

It is found in the secreted. The enzyme catalyses 2 a phenolic donor + H2O2 = 2 a phenolic radical donor + 2 H2O. Removal of H(2)O(2), oxidation of toxic reductants, biosynthesis and degradation of lignin, suberization, auxin catabolism, response to environmental stresses such as wounding, pathogen attack and oxidative stress. These functions might be dependent on each isozyme/isoform in each plant tissue. The sequence is that of Peroxidase 63 (PER63) from Arabidopsis thaliana (Mouse-ear cress).